We begin with the raw amino-acid sequence, 377 residues long: Probable multidrug ABC transporter permease YbhS (377 aa).

The Cytoplasmic segment spans residues 1–28 (MSNPILSWRRVRALCVKETRQIVRDPSS). Residues 29–49 (WLIAVVIPLLLLFIFGYGINL) form a helical membrane-spanning segment. At 50–181 (DSSKLRVGIL…WFNPAAISQH (132 aa)) the chain is on the periplasmic side. In terms of domain architecture, ABC transmembrane type-2 spans 145–375 (IWQIWQMQRA…GLTWLKTKRR (231 aa)). Residues 182–202 (FIIPGAVTIIMTVIGAILTSL) form a helical membrane-spanning segment. Residues 203-234 (VVAREWERGTMEALLSTEITRTELLLCKLIPY) are Cytoplasmic-facing. A helical membrane pass occupies residues 235–255 (YFLGMLAMLLCMLVSVFILGV). Residues 256–261 (PYRGSL) are Periplasmic-facing. A helical transmembrane segment spans residues 262–282 (LILFFISSLFLLSTLGMGLLI). Residues 283–291 (STITRNQFN) lie on the Cytoplasmic side of the membrane. Residues 292-312 (AAQVALNAAFLPSIMLSGFIF) form a helical membrane-spanning segment. Residues 313 to 345 (QIDSMPAVIRAVTYIIPARYFVSTLQSLFLAGN) lie on the Periplasmic side of the membrane. Residues 346-366 (IPVVLVVNVLFLIASAVMFIG) traverse the membrane as a helical segment. Residues 367–377 (LTWLKTKRRLD) are Cytoplasmic-facing.

Belongs to the ABC-2 integral membrane protein family. As to quaternary structure, the complex is probably composed of two ATP-binding proteins (YbhF) and two transmembrane proteins (YbhR and YbhS).

The protein localises to the cell inner membrane. Functionally, part of the ABC transporter complex YbhFSR that could be involved in efflux of cefoperazone. Probably involved in the translocation of the substrate across the membrane. The chain is Probable multidrug ABC transporter permease YbhS (ybhS) from Escherichia coli O157:H7.